Here is a 37-residue protein sequence, read N- to C-terminus: Mu-agatoxin-Aa1d (37 aa).

4 cysteine pairs are disulfide-bonded: cysteine 2/cysteine 18, cysteine 9/cysteine 23, cysteine 17/cysteine 33, and cysteine 25/cysteine 31. Asparagine amide is present on asparagine 37.

Belongs to the neurotoxin 07 (Beta/delta-agtx) family. 03 (aga-4) subfamily. Aga sub-subfamily. As to expression, expressed by the venom gland.

It localises to the secreted. Insecticidal neurotoxin that induces an irreversible spastic paralysis when injected into insects. Modifies presynaptic voltage-gated sodium channels (Nav), causing them to open at the normal resting potential of the nerve. This leads to spontaneous release of neurotransmitter and repetitive action potentials in motor neurons. This is Mu-agatoxin-Aa1d from Agelenopsis aperta (North American funnel-web spider).